The sequence spans 375 residues: Succinyl-diaminopimelate desuccinylase (375 aa).

Position 66 (histidine 66) interacts with Zn(2+). Aspartate 68 is a catalytic residue. Aspartate 99 serves as a coordination point for Zn(2+). Glutamate 133 functions as the Proton acceptor in the catalytic mechanism. Residues glutamate 134, glutamate 162, and histidine 348 each contribute to the Zn(2+) site.

This sequence belongs to the peptidase M20A family. DapE subfamily. Homodimer. It depends on Zn(2+) as a cofactor. The cofactor is Co(2+).

The catalysed reaction is N-succinyl-(2S,6S)-2,6-diaminopimelate + H2O = (2S,6S)-2,6-diaminopimelate + succinate. It participates in amino-acid biosynthesis; L-lysine biosynthesis via DAP pathway; LL-2,6-diaminopimelate from (S)-tetrahydrodipicolinate (succinylase route): step 3/3. Catalyzes the hydrolysis of N-succinyl-L,L-diaminopimelic acid (SDAP), forming succinate and LL-2,6-diaminopimelate (DAP), an intermediate involved in the bacterial biosynthesis of lysine and meso-diaminopimelic acid, an essential component of bacterial cell walls. The protein is Succinyl-diaminopimelate desuccinylase of Yersinia enterocolitica serotype O:8 / biotype 1B (strain NCTC 13174 / 8081).